A 119-amino-acid chain; its full sequence is Large ribosomal subunit protein bL20 (119 aa).

This sequence belongs to the bacterial ribosomal protein bL20 family.

Binds directly to 23S ribosomal RNA and is necessary for the in vitro assembly process of the 50S ribosomal subunit. It is not involved in the protein synthesizing functions of that subunit. This chain is Large ribosomal subunit protein bL20, found in Levilactobacillus brevis (strain ATCC 367 / BCRC 12310 / CIP 105137 / JCM 1170 / LMG 11437 / NCIMB 947 / NCTC 947) (Lactobacillus brevis).